The chain runs to 260 residues: Salicylic acid-binding protein 2 (260 aa).

Salicylate contacts are provided by Ala-13, Ser-81, and Lys-159. The active-site Acyl-ester intermediate is Ser-81. Residues Asp-210 and His-238 each act as charge relay system in the active site. Salicylate contacts are provided by His-238, Leu-253, and His-257.

The protein belongs to the AB hydrolase superfamily. Methylesterase family.

It catalyses the reaction methyl salicylate + H2O = salicylate + methanol + H(+). It participates in plant hormone biosynthesis. With respect to regulation, esterase activity is down-regulated by salicylic acid (SA) or by tetraFA, a synthetic SA analog. Required to convert methyl salicylate (MeSA) to salicylic acid (SA) as part of the signal transduction pathways that activate systemic acquired resistance in systemic tissue. MeSA is believed to be an inactive form that needs to be demethylated to exert a biological effect. Also able to catalyze the conversion of acibenzolar-S-methyl into acibenzolar to induce systemic acquired resistance. This is Salicylic acid-binding protein 2 from Nicotiana tabacum (Common tobacco).